The following is a 121-amino-acid chain: Small ribosomal subunit protein uS13 (121 aa).

A disordered region spans residues 94 to 121 (DLPVRGQRTKTNARTRKGPRKSGVQLKK). Positions 100 to 121 (QRTKTNARTRKGPRKSGVQLKK) are enriched in basic residues.

The protein belongs to the universal ribosomal protein uS13 family. Part of the 30S ribosomal subunit. Forms a loose heterodimer with protein S19. Forms two bridges to the 50S subunit in the 70S ribosome.

In terms of biological role, located at the top of the head of the 30S subunit, it contacts several helices of the 16S rRNA. In the 70S ribosome it contacts the 23S rRNA (bridge B1a) and protein L5 of the 50S subunit (bridge B1b), connecting the 2 subunits; these bridges are implicated in subunit movement. Contacts the tRNAs in the A and P-sites. The sequence is that of Small ribosomal subunit protein uS13 from Polynucleobacter necessarius subsp. necessarius (strain STIR1).